Reading from the N-terminus, the 297-residue chain is Ribonuclease HIII (297 aa).

The RNase H type-2 domain occupies 81 to 297 (IPIIGTDEVG…NTKKAQALLK (217 aa)). Aspartate 87, glutamate 88, and aspartate 192 together coordinate a divalent metal cation.

The protein belongs to the RNase HII family. RnhC subfamily. It depends on Mn(2+) as a cofactor. Mg(2+) serves as cofactor.

The protein resides in the cytoplasm. It catalyses the reaction Endonucleolytic cleavage to 5'-phosphomonoester.. In terms of biological role, endonuclease that specifically degrades the RNA of RNA-DNA hybrids. This is Ribonuclease HIII from Streptococcus agalactiae serotype III (strain NEM316).